The following is a 486-amino-acid chain: Protein nucleotidyltransferase YdiU (486 aa).

Positions 90, 92, 93, 113, 125, 126, 176, and 183 each coordinate ATP. Asp-252 functions as the Proton acceptor in the catalytic mechanism. Residues Asn-253 and Asp-262 each contribute to the Mg(2+) site. Asp-262 contacts ATP.

It belongs to the SELO family. It depends on Mg(2+) as a cofactor. Requires Mn(2+) as cofactor.

It carries out the reaction L-seryl-[protein] + ATP = 3-O-(5'-adenylyl)-L-seryl-[protein] + diphosphate. The catalysed reaction is L-threonyl-[protein] + ATP = 3-O-(5'-adenylyl)-L-threonyl-[protein] + diphosphate. It catalyses the reaction L-tyrosyl-[protein] + ATP = O-(5'-adenylyl)-L-tyrosyl-[protein] + diphosphate. The enzyme catalyses L-histidyl-[protein] + UTP = N(tele)-(5'-uridylyl)-L-histidyl-[protein] + diphosphate. It carries out the reaction L-seryl-[protein] + UTP = O-(5'-uridylyl)-L-seryl-[protein] + diphosphate. The catalysed reaction is L-tyrosyl-[protein] + UTP = O-(5'-uridylyl)-L-tyrosyl-[protein] + diphosphate. In terms of biological role, nucleotidyltransferase involved in the post-translational modification of proteins. It can catalyze the addition of adenosine monophosphate (AMP) or uridine monophosphate (UMP) to a protein, resulting in modifications known as AMPylation and UMPylation. The polypeptide is Protein nucleotidyltransferase YdiU (Pseudomonas putida (strain W619)).